The chain runs to 478 residues: Glutamate--tRNA ligase (478 aa).

The 'HIGH' region signature appears at 9–19 (PSPTGLLHIGT). The 'KMSKS' region signature appears at 248–252 (KLSKR). Lys-251 is a binding site for ATP.

The protein belongs to the class-I aminoacyl-tRNA synthetase family. Glutamate--tRNA ligase type 1 subfamily. In terms of assembly, monomer.

The protein resides in the cytoplasm. The catalysed reaction is tRNA(Glu) + L-glutamate + ATP = L-glutamyl-tRNA(Glu) + AMP + diphosphate. Its function is as follows. Catalyzes the attachment of glutamate to tRNA(Glu) in a two-step reaction: glutamate is first activated by ATP to form Glu-AMP and then transferred to the acceptor end of tRNA(Glu). In Prochlorococcus marinus subsp. pastoris (strain CCMP1986 / NIES-2087 / MED4), this protein is Glutamate--tRNA ligase.